Consider the following 208-residue polypeptide: Imidazoleglycerol-phosphate dehydratase (208 aa).

Belongs to the imidazoleglycerol-phosphate dehydratase family.

Its subcellular location is the cytoplasm. It catalyses the reaction D-erythro-1-(imidazol-4-yl)glycerol 3-phosphate = 3-(imidazol-4-yl)-2-oxopropyl phosphate + H2O. It participates in amino-acid biosynthesis; L-histidine biosynthesis; L-histidine from 5-phospho-alpha-D-ribose 1-diphosphate: step 6/9. The chain is Imidazoleglycerol-phosphate dehydratase from Arthrobacter sp. (strain FB24).